A 505-amino-acid chain; its full sequence is Gap junction alpha-10 protein (505 aa).

Over 1-16 the chain is Cytoplasmic; the sequence is MGDWNLLGGILEEVHS. The helical transmembrane segment at 17–37 threads the bilayer; that stretch reads HSTIVGKIWLTILFIFRMLVL. The Extracellular portion of the chain corresponds to 38–76; it reads GVAAEDVWDDEQSAFACNTQQPGCNNICYDDAFPISLIR. A helical membrane pass occupies residues 77–97; sequence FWVLQIIFVSSPSLVYMGHAL. At 98 to 165 the chain is on the cytoplasmic side; the sequence is YRLRDFEKQR…TYVLHILTRS (68 aa). A helical membrane pass occupies residues 166–186; sequence VLEVGFMIGQYILYGFQMHPI. Residues 187-209 are Extracellular-facing; that stretch reads YKCTQAPCPNSVDCFVSRPTEKT. A helical membrane pass occupies residues 210 to 230; it reads IFMLFMHSIAAISLLLNILEI. Residues 231–505 lie on the Cytoplasmic side of the membrane; it reads FHLGIRKIMR…IIHETYVYVY (275 aa). Residues 371–383 show a composition bias toward polar residues; that stretch reads TMTASQHRPSSAL. The disordered stretch occupies residues 371 to 491; sequence TMTASQHRPS…SKSSHVDSPP (121 aa). Residues 437–446 show a composition bias toward basic and acidic residues; sequence MSEKGQRHSD. Low complexity predominate over residues 447–460; it reads SGSSRSLNSSCLDF.

It belongs to the connexin family. Alpha-type (group II) subfamily. In terms of assembly, a connexon is composed of a hexamer of connexins. Low levels were detected in skin, heart, kidney, testis, ovary, intestine. Expression not detected in brain, sciatic nerve or liver. According to PubMed:15147297 expression is detected only in horizontal cells in the inner nuclear layer of the retina and not in other neurons of the central nervous system or tissues. Detected in the outer plexiform layer of the retina (at protein level).

The protein localises to the cell membrane. It is found in the cell junction. The protein resides in the gap junction. Functionally, one gap junction consists of a cluster of closely packed pairs of transmembrane channels, the connexons, through which materials of low MW diffuse from one cell to a neighboring cell. Involved in tracer coupling between horizontal cells of the retina. May play a role in the regulation of horizontal cell patterning. This chain is Gap junction alpha-10 protein (Gja10), found in Mus musculus (Mouse).